We begin with the raw amino-acid sequence, 346 residues long: Elongation factor Ts (346 aa).

An involved in Mg(2+) ion dislocation from EF-Tu region spans residues T80–V83.

It belongs to the EF-Ts family.

It localises to the cytoplasm. Functionally, associates with the EF-Tu.GDP complex and induces the exchange of GDP to GTP. It remains bound to the aminoacyl-tRNA.EF-Tu.GTP complex up to the GTP hydrolysis stage on the ribosome. The polypeptide is Elongation factor Ts (Streptococcus uberis (strain ATCC BAA-854 / 0140J)).